The chain runs to 435 residues: Adenylosuccinate synthetase (435 aa).

GTP-binding positions include 17-23 and 45-47; these read GDEGKGK and GHT. The Proton acceptor role is filled by Asp18. Residues Asp18 and Gly45 each contribute to the Mg(2+) site. Residues 18–21, 43–46, Thr134, Arg148, Gln229, Thr244, and Arg308 contribute to the IMP site; these read DEGK and NAGH. His46 acts as the Proton donor in catalysis. 304–310 is a substrate binding site; the sequence is SVTGRPR. GTP contacts are provided by residues Arg310, 336–338, and 418–420; these read KLD and STG.

It belongs to the adenylosuccinate synthetase family. As to quaternary structure, homodimer. Mg(2+) serves as cofactor.

The protein localises to the cytoplasm. The catalysed reaction is IMP + L-aspartate + GTP = N(6)-(1,2-dicarboxyethyl)-AMP + GDP + phosphate + 2 H(+). Its pathway is purine metabolism; AMP biosynthesis via de novo pathway; AMP from IMP: step 1/2. Plays an important role in the de novo pathway of purine nucleotide biosynthesis. Catalyzes the first committed step in the biosynthesis of AMP from IMP. This chain is Adenylosuccinate synthetase, found in Bordetella pertussis (strain Tohama I / ATCC BAA-589 / NCTC 13251).